A 346-amino-acid polypeptide reads, in one-letter code: Phosphoribosylformylglycinamidine cyclo-ligase (346 aa).

The protein belongs to the AIR synthase family.

It is found in the cytoplasm. The enzyme catalyses 2-formamido-N(1)-(5-O-phospho-beta-D-ribosyl)acetamidine + ATP = 5-amino-1-(5-phospho-beta-D-ribosyl)imidazole + ADP + phosphate + H(+). Its pathway is purine metabolism; IMP biosynthesis via de novo pathway; 5-amino-1-(5-phospho-D-ribosyl)imidazole from N(2)-formyl-N(1)-(5-phospho-D-ribosyl)glycinamide: step 2/2. The polypeptide is Phosphoribosylformylglycinamidine cyclo-ligase (Photobacterium profundum (strain SS9)).